Reading from the N-terminus, the 185-residue chain is MISAGDFRNGVTIEFEGNIYQIIEFQHVKPGKGAAFVRTKLKNIISGGVVEKTFRPTEKCPTAHIDRKDMQYLYADDDFYHFMDVETYDQIDLPKDEVGDALKFVKENEMCKVCSHKGNVFAVEPPLFVELTVTETEPGFKGDTATGATKPATVETGATVYVPLFVETDDVIKIDTRTGEYLSRV.

Belongs to the elongation factor P family.

It localises to the cytoplasm. The protein operates within protein biosynthesis; polypeptide chain elongation. In terms of biological role, involved in peptide bond synthesis. Stimulates efficient translation and peptide-bond synthesis on native or reconstituted 70S ribosomes in vitro. Probably functions indirectly by altering the affinity of the ribosome for aminoacyl-tRNA, thus increasing their reactivity as acceptors for peptidyl transferase. The chain is Elongation factor P from Agathobacter rectalis (strain ATCC 33656 / DSM 3377 / JCM 17463 / KCTC 5835 / VPI 0990) (Eubacterium rectale).